The primary structure comprises 405 residues: Envelope glycoprotein M (405 aa).

Residues 1–17 (MKSSKNDTFVYRTWVKT) lie on the Intravirion side of the membrane. The helical transmembrane segment at 18–38 (LVVYFVMFVMSAVVPITAMFP) threads the bilayer. Over 39 to 76 (NLGYPCYFNALVDYGALNLTNYNLAHHLTPTLYLEPPE) the chain is Virion surface. Residues 77–97 (MFVYITLVFIADCVAFIYYAC) traverse the membrane as a helical segment. The Intravirion segment spans residues 98 to 121 (GEVALIKARKKVSGLTDLSAWVSA). The chain crosses the membrane as a helical span at residues 122–142 (VGSPTVLFLAILKLWSIQVFI). At 143 to 149 (QVLSYKH) the chain is on the virion surface side. A helical membrane pass occupies residues 150-170 (VFLSAFVYFLHFLASVLHACA). The Intravirion segment spans residues 171–192 (CVTRFSPVWVVKAQDNSIPQDT). Residues 193 to 215 (FLWWVVFYLKPVVTNLYLGCLAL) form a helical membrane-spanning segment. The Virion surface portion of the chain corresponds to 216-245 (ETLVFSLSVFLALGNSFYFMVGDMVLGAVN). The helical transmembrane segment at 246-266 (LFLILPIFWYILTEVWLASFL) threads the bilayer. Residue arginine 267 is a topological domain, intravirion. Residues 268–288 (HNFGFYCGMFIASIILILPLV) form a helical membrane-spanning segment. Over 289 to 299 (RYEAVFVSAKL) the chain is Virion surface. Residues 300 to 320 (HTTVAINVAIIPILCSVAMLI) traverse the membrane as a helical segment. Over 321–405 (RICRIFKSMR…TTDSEEEIFP (85 aa)) the chain is Intravirion. The segment at 346 to 405 (LESEPRPRPSRTPSPGRNRRRSSTSSSSSRSTRRQRPVSTQALVSSVLPMTTDSEEEIFP) is disordered. Residues 386-397 (QALVSSVLPMTT) show a composition bias toward polar residues.

It belongs to the herpesviridae glycoprotein M family. Interacts (via N-terminus) with gN (via N-terminus). The gM-gN heterodimer forms the gCII complex.

It is found in the virion membrane. Its subcellular location is the host Golgi apparatus. It localises to the host trans-Golgi network. The protein resides in the host endosome membrane. The protein localises to the host nucleus inner membrane. Envelope glycoprotein important for virion assembly and egress. Plays a role in the correct incorporation of gH-gL into virion membrane. Directs the glycoprotein N (gN) to the host trans-Golgi network. The chain is Envelope glycoprotein M from Epstein-Barr virus (strain B95-8) (HHV-4).